Reading from the N-terminus, the 521-residue chain is MALLRLVATECRNVLQRGYSTASVPTTKMFIDGKFVESKTNDWIDLHDPATNEVVTRVPKCTQDEMQTAVESSKKAYKTWRQSSILSRQQVMLKLQHIIRNNMSELAKNITKEQGKTLIDAEGDVLRGLQVVEHCCSITSLQMGETVPNIAKDMDTYSYHLPLGVTAGIAPFNFPAMIPLWMFPVAITCGNTSIIKPSERVPGATMLLMEMLNEAGCPPGVVNVIHGAHDAVNFVCDNPDIRAVSFVGSDQAGKYIYERAGRNGKRVQCNMGAKNHGVIMADANKENTLNQLAGAAFGAAGQRCMALSTAVFVGEARNWIPDLVERARKLKVNAGHLPGTDLGPVISPQSKQRINELVESGAKEGAKIVLDGRNIKVEGFEKGNFVGPTIISDVTPNMKCYTEEIFGPVLVCLSVDTIDEAIELINNNPYGNGTAIFTTNGATARKFVNDIDVGQVGVNVPIPVPLPMFSFTGSRGSFLGDCHFYGKQGIKFYTQTKTVTQLWREGDVSHTKAAVAMPTMK.

Residues alanine 170, phenylalanine 172, lysine 196, glutamate 199, arginine 200, and serine 249 each coordinate NAD(+). The active-site Nucleophile is cysteine 304. Glutamate 404 lines the NAD(+) pocket.

This sequence belongs to the aldehyde dehydrogenase family. In terms of assembly, homotetramer.

It localises to the mitochondrion. It carries out the reaction 2-methyl-3-oxopropanoate + NAD(+) + CoA + H2O = propanoyl-CoA + hydrogencarbonate + NADH + H(+). The enzyme catalyses 3-oxopropanoate + NAD(+) + CoA + H2O = hydrogencarbonate + acetyl-CoA + NADH + H(+). Functionally, probable malonate and methylmalonate semialdehyde dehydrogenase involved in the catabolism of valine, thymine, and compounds catabolized by way of beta-alanine, including uracil and cytidine. The protein is Probable methylmalonate-semialdehyde/malonate-semialdehyde dehydrogenase [acylating], mitochondrial of Anopheles gambiae (African malaria mosquito).